Here is a 92-residue protein sequence, read N- to C-terminus: Mitochondrial import inner membrane translocase subunit tim8 (92 aa).

A Twin CX3C motif motif is present at residues 43–68 (CWKKCVTSPIKTNQLDKTEAVCMADC). Disulfide bonds link C43-C68 and C47-C64.

It belongs to the small Tim family. Heterohexamer; composed of 3 copies of tim8 and 3 copies of tim13, named soluble 70 kDa complex. Associates with the TIM22 complex, whose core is composed of tim22 and tim54. Interacts with the transmembrane regions of multi-pass transmembrane proteins in transit.

The protein resides in the mitochondrion inner membrane. Its function is as follows. Mitochondrial intermembrane chaperone that participates in the import and insertion of some multi-pass transmembrane proteins into the mitochondrial inner membrane. Also required for the transfer of beta-barrel precursors from the TOM complex to the sorting and assembly machinery (SAM complex) of the outer membrane. Acts as a chaperone-like protein that protects the hydrophobic precursors from aggregation and guide them through the mitochondrial intermembrane space. The tim8-tim13 complex is non essential and only mediates the import of few proteins, while the predominant tim9-tim10 70 kDa complex is crucial and mediates the import of much more proteins. The chain is Mitochondrial import inner membrane translocase subunit tim8 (tim8) from Neurospora crassa (strain ATCC 24698 / 74-OR23-1A / CBS 708.71 / DSM 1257 / FGSC 987).